The following is a 315-amino-acid chain: 2-oxoglutarate and iron-dependent oxygenase domain-containing protein 3 (315 aa).

The interval M1–P32 is disordered. Residues M1–R41 are Cytoplasmic-facing. Basic and acidic residues predominate over residues A18 to P32. Residues I42–I62 form a helical; Signal-anchor for type II membrane protein membrane-spanning segment. Over D63–T315 the chain is Lumenal. The 103-residue stretch at K203–P305 folds into the Fe2OG dioxygenase domain. Residue N211 is glycosylated (N-linked (GlcNAc...) asparagine). Fe cation-binding residues include H226 and D228. N-linked (GlcNAc...) asparagine glycosylation is present at N263. H284 is a binding site for Fe cation. R294 is a catalytic residue. A 2-oxoglutarate-binding site is contributed by R294.

Belongs to the OGFOD3 family. Fe(2+) is required as a cofactor. The cofactor is L-ascorbate.

The protein resides in the membrane. This is 2-oxoglutarate and iron-dependent oxygenase domain-containing protein 3 (Ogfod3) from Rattus norvegicus (Rat).